A 174-amino-acid chain; its full sequence is Regenerating islet-derived protein 3-gamma (174 aa).

A signal peptide spans 1 to 26; it reads MLPRITITIMSWMLLSCLMLLSQVQG. Positions 27–37 are excised as a propeptide; it reads EVAKKDAPSSR. Disulfide bonds link Cys40-Cys51, Cys68-Cys170, and Cys145-Cys162. The region spanning 47 to 171 is the C-type lectin domain; that stretch reads YGSYCYALFS…CNLELPYVCK (125 aa). The tract at residues 103–118 is sufficient to activate EXTL3; the sequence is WIGLHDPTLGYEPNRG. Position 107 (His107) interacts with Zn(2+). Positions 114 to 116 match the EPN motif; it reads EPN. Residues Glu121 and His144 each contribute to the Zn(2+) site.

In terms of assembly, forms a hexameric membrane-permeabilizing oligomeric pore on membrane phospholipids. The hexamer is formed by three dimers related by helical symmetry. Forms filaments, filamentation traps pore complexes and limits damage to host cells. Interacts with EXTL3. Proteolytic processing by trypsin removes an inhibitory N-terminal propeptide and is essential for peptidoglycan binding and antibacterial activity. As to expression, predominantly expressed in the small intestine, including Paneth cells (at protein level). Hardly detectable in the colon (at protein level). Highly expressed in the lung epithelium during methicillin-resistant S.aureus infection and allergic airway inflammation (at protein level). Skin injury increases its epidermal expression. Also expressed in the pancreas. Expressed by nocireceptors.

It is found in the secreted. The protein resides in the cytoplasm. Lipopolysaccharide inhibits pore-forming activity, explaining why is bactericidal for Gram-positive but not Gram-negative bacteria. Functionally, bactericidal C-type lectin which acts exclusively against Gram-positive bacteria and mediates bacterial killing by binding to surface-exposed carbohydrate moieties of peptidoglycan. Restricts bacterial colonization of the intestinal epithelial surface and consequently limits activation of adaptive immune responses by the microbiota. Acts as a hormone in response to different stimuli like anti-inflammatory signals, such as IL17A, or gut microbiome. Is secreted by different cell types to activate its receptor EXTL3 and induce cell specific signaling pathways. Induced by IL17A in keratinocytes, regulates keratinocyte proliferation and differentiation after skin injury. In parallel, inhibits skin inflammation through the inhibition of inflammatory cytokines such as IL6 and TNF. Induced by IL22 in lung epithelial cells, inhibits cytokine production and regulates allergic airway inflammation. Induced in small intestine by inulin-enriched diet and Lactobacillus gasseri enriched microbiome, plays a role in the improvement of gut barrier function, the regulation of energy balance and glucose levels. Modulates microbiota composition in duodenal contents. Produced by nociceptor in response to endotoxins, prevents endotoxic death by targeting kynurenine pathway in microglia. In terms of biological role, has bacteriostatic activity. Its function is as follows. Has bactericidal activity against L.monocytogenes and methicillin-resistant S.aureus. In Mus musculus (Mouse), this protein is Regenerating islet-derived protein 3-gamma.